The sequence spans 436 residues: Trigger factor (436 aa).

Positions 161–246 (DDRVTVDFVG…VNKVEGLSLP (86 aa)) constitute a PPIase FKBP-type domain.

This sequence belongs to the FKBP-type PPIase family. Tig subfamily.

The protein localises to the cytoplasm. It carries out the reaction [protein]-peptidylproline (omega=180) = [protein]-peptidylproline (omega=0). Its function is as follows. Involved in protein export. Acts as a chaperone by maintaining the newly synthesized protein in an open conformation. Functions as a peptidyl-prolyl cis-trans isomerase. The polypeptide is Trigger factor (Pseudoalteromonas atlantica (strain T6c / ATCC BAA-1087)).